The chain runs to 425 residues: uncharacterized protein (425 aa).

Residues 135 to 202 (KEQEILGCSH…AAQYCKYCKN (68 aa)) form a CHY-type zinc finger. C142, H144, C153, C156, C162, C165, H166, H172, C184, C187, C197, C200, C209, C212, H225, C226, C229, C232, H244, C245, C248, C251, H260, and C262 together coordinate Zn(2+). The CTCHY-type zinc-finger motif lies at 204–270 (MGRYYCNKCK…RCIERSTDCN (67 aa)). The RING-type; atypical zinc finger occupies 271-313 (CPICGEYMFNSRERVIFLSCSHPLHQRCHEEYIRTNYRCPTCY).

This is an uncharacterized protein from Schizosaccharomyces pombe (strain 972 / ATCC 24843) (Fission yeast).